Consider the following 143-residue polypeptide: MELNSIKPADGAKHAARRVGRGIGSGLGKTAGRGHKGQKSRSGGYHKVGFEGGQMPLQRRLPKRGFKSHLLKFNAEISLTALENLGLAEVDVLALKNAGLVGELAKVVKVIKSGEISKAVKLSGITATAGAKAAIEAAGGSLA.

Residues 1–54 form a disordered region; sequence MELNSIKPADGAKHAARRVGRGIGSGLGKTAGRGHKGQKSRSGGYHKVGFEGGQ. Residues 21 to 31 show a composition bias toward gly residues; it reads RGIGSGLGKTA.

Belongs to the universal ribosomal protein uL15 family. In terms of assembly, part of the 50S ribosomal subunit.

Binds to the 23S rRNA. This Acidovorax ebreus (strain TPSY) (Diaphorobacter sp. (strain TPSY)) protein is Large ribosomal subunit protein uL15.